The chain runs to 275 residues: NAD kinase (275 aa).

Residue Asp-68 is the Proton acceptor of the active site. Residues 68-69, Arg-73, 136-137, Lys-147, Arg-164, Asp-166, 177-182, Ala-201, and Gln-236 each bind NAD(+); these read DG, NE, and TAYAMS.

This sequence belongs to the NAD kinase family. Requires a divalent metal cation as cofactor.

Its subcellular location is the cytoplasm. It catalyses the reaction NAD(+) + ATP = ADP + NADP(+) + H(+). Involved in the regulation of the intracellular balance of NAD and NADP, and is a key enzyme in the biosynthesis of NADP. Catalyzes specifically the phosphorylation on 2'-hydroxyl of the adenosine moiety of NAD to yield NADP. This chain is NAD kinase, found in Methanosarcina barkeri (strain Fusaro / DSM 804).